The chain runs to 376 residues: WD repeat-containing protein 86 (376 aa).

WD repeat units lie at residues 13–52 (DHRG…CCAL), 55–94 (GHES…QVYR), 95–132 (GHTS…MSRE), 135–188 (GHRN…CHQT), 191–232 (GHTG…RVFR), 234–272 (HRGS…RTFT), 274–310 (HRRN…LRRV), and 313–350 (GHTF…GAPR).

The protein is WD repeat-containing protein 86 (WDR86) of Homo sapiens (Human).